The primary structure comprises 179 residues: MSRVGKKSITLPDKVTVKVNGSSVQVEGPKGKLSWTLPEGITATVEGNQLSVDRAGESRQLRALHGTNRSLLNNMVIGVSEGFVKNLEIVGVGFRAAVKGNILDLNLGKSHPINQVIPEGLKVTVTENTKVTVEGIDKQVVGQFAAEVRAYYPPEPYKGKGVRFVGEVIRRKEGKSVGK.

Belongs to the universal ribosomal protein uL6 family. Part of the 50S ribosomal subunit.

Its function is as follows. This protein binds to the 23S rRNA, and is important in its secondary structure. It is located near the subunit interface in the base of the L7/L12 stalk, and near the tRNA binding site of the peptidyltransferase center. This Akkermansia muciniphila (strain ATCC BAA-835 / DSM 22959 / JCM 33894 / BCRC 81048 / CCUG 64013 / CIP 107961 / Muc) protein is Large ribosomal subunit protein uL6.